Consider the following 389-residue polypeptide: 26S proteasome regulatory subunit 10B (389 aa).

Lys72 carries the N6-acetyllysine modification. 174 to 181 (GPPGTGKT) contacts ATP. An N6-acetyllysine modification is found at Lys206. Residue Ser244 is modified to Phosphoserine.

This sequence belongs to the AAA ATPase family. Component of the 19S proteasome regulatory particle complex. The 26S proteasome consists of a 20S core particle (CP) and two 19S regulatory subunits (RP). The regulatory particle is made of a lid composed of 9 subunits, a base containing 6 ATPases including PSMC6 and few additional components. Interacts with PAAF1.

The protein localises to the cytoplasm. It localises to the nucleus. Functionally, component of the 26S proteasome, a multiprotein complex involved in the ATP-dependent degradation of ubiquitinated proteins. This complex plays a key role in the maintenance of protein homeostasis by removing misfolded or damaged proteins, which could impair cellular functions, and by removing proteins whose functions are no longer required. Therefore, the proteasome participates in numerous cellular processes, including cell cycle progression, apoptosis, or DNA damage repair. PSMC6 belongs to the heterohexameric ring of AAA (ATPases associated with diverse cellular activities) proteins that unfolds ubiquitinated target proteins that are concurrently translocated into a proteolytic chamber and degraded into peptides. The protein is 26S proteasome regulatory subunit 10B (PSMC6) of Homo sapiens (Human).